A 511-amino-acid polypeptide reads, in one-letter code: Protoheme IX farnesyltransferase, mitochondrial (511 aa).

The N-terminal 23 residues, 1–23 (MSSSTESLPGTLRRTLTTSRAPA), are a transit peptide targeting the mitochondrion. Disordered regions lie at residues 1 to 27 (MSSSTESLPGTLRRTLTTSRAPAATSS) and 50 to 136 (HDSA…LAPD). Low complexity-rich tracts occupy residues 52–79 (SASSQRSTTVASTTSTTADAADGSSSTT), 104–115 (RKAAAAAAAAAA), and 126–136 (PDAPTADLAPD). 8 helical membrane passes run 168-188 (LTVLVVLSAMVPYALYPVPSF), 197-217 (SLAPSLSPLTLLFLTTGTTLC), 253-273 (AAVLFAVGCGLAGTLALYFGV), 275-295 (PTVSFLGAANIALYAGAYTPL), 303-323 (TWVGAIVGGIPPLMGWAAAAG), 344-364 (LGGWLFAGLLFAWQFPHFMPL), 398-418 (AFIPLCVGLSATGVTEWSFAV), and 444-464 (ARGLFWASVWHLPVIMVLALA).

Belongs to the UbiA prenyltransferase family.

Its subcellular location is the mitochondrion membrane. Functionally, converts protoheme IX and farnesyl diphosphate to heme O. The chain is Protoheme IX farnesyltransferase, mitochondrial (pft-1) from Neurospora crassa (strain ATCC 24698 / 74-OR23-1A / CBS 708.71 / DSM 1257 / FGSC 987).